Consider the following 40-residue polypeptide: Photosystem II reaction center protein J (40 aa).

A helical transmembrane segment spans residues 8-28 (IPLWIIGTVTGLLVIGLIGIF).

Belongs to the PsbJ family. As to quaternary structure, PSII is composed of 1 copy each of membrane proteins PsbA, PsbB, PsbC, PsbD, PsbE, PsbF, PsbH, PsbI, PsbJ, PsbK, PsbL, PsbM, PsbT, PsbX, PsbY, PsbZ, Psb30/Ycf12, at least 3 peripheral proteins of the oxygen-evolving complex and a large number of cofactors. It forms dimeric complexes.

It localises to the plastid. The protein localises to the chloroplast thylakoid membrane. In terms of biological role, one of the components of the core complex of photosystem II (PSII). PSII is a light-driven water:plastoquinone oxidoreductase that uses light energy to abstract electrons from H(2)O, generating O(2) and a proton gradient subsequently used for ATP formation. It consists of a core antenna complex that captures photons, and an electron transfer chain that converts photonic excitation into a charge separation. This Ipomoea purpurea (Common morning glory) protein is Photosystem II reaction center protein J.